The following is a 256-amino-acid chain: Protein YIPF7 (256 aa).

Residues 1 to 125 are Cytoplasmic-facing; sequence MSNLAQFDSD…VDGSIMNETD (125 aa). Polar residues-rich tracts occupy residues 18-31 and 38-48; these read IDNQEQSGNDSNAY and RKQQAGEQPQP. The interval 18 to 48 is disordered; that stretch reads IDNQEQSGNDSNAYGNLYGSRKQQAGEQPQP. A helical membrane pass occupies residues 126 to 146; it reads LTGPILFCVALGATLLLAGKV. Gln147 is a topological domain (extracellular). The helical transmembrane segment at 148–168 threads the bilayer; the sequence is FGYVYGMSAIGCLVIHALLNL. The Cytoplasmic segment spans residues 169–172; it reads MSSS. A helical membrane pass occupies residues 173–193; that stretch reads GVSYGCVASVLGYCLLPMVIL. The Extracellular portion of the chain corresponds to 194–196; it reads SGC. The chain crosses the membrane as a helical span at residues 197–217; that stretch reads AMFFSLQGIFGIMSSLVIIGW. Residues 218–235 lie on the Cytoplasmic side of the membrane; the sequence is CSLSASKIFIAALHMEGQ. A helical membrane pass occupies residues 236-256; that stretch reads QLLVAYPCAILYGLFALLTIF.

It belongs to the YIP1 family.

It localises to the endoplasmic reticulum membrane. The protein localises to the golgi apparatus. Its subcellular location is the cis-Golgi network membrane. The protein resides in the trans-Golgi network membrane. The polypeptide is Protein YIPF7 (YIPF7) (Homo sapiens (Human)).